Here is a 330-residue protein sequence, read N- to C-terminus: Ribosomal RNA small subunit methyltransferase H (330 aa).

S-adenosyl-L-methionine-binding positions include 48–50, D67, L101, D115, and Q122; that span reads GGH.

Belongs to the methyltransferase superfamily. RsmH family.

The protein localises to the cytoplasm. It carries out the reaction cytidine(1402) in 16S rRNA + S-adenosyl-L-methionine = N(4)-methylcytidine(1402) in 16S rRNA + S-adenosyl-L-homocysteine + H(+). Specifically methylates the N4 position of cytidine in position 1402 (C1402) of 16S rRNA. The polypeptide is Ribosomal RNA small subunit methyltransferase H (Pseudarthrobacter chlorophenolicus (strain ATCC 700700 / DSM 12829 / CIP 107037 / JCM 12360 / KCTC 9906 / NCIMB 13794 / A6) (Arthrobacter chlorophenolicus)).